A 571-amino-acid polypeptide reads, in one-letter code: Sporulation-specific protein 1 (571 aa).

Disordered regions lie at residues 1–53, 67–133, and 482–501; these read MRSS…EEDV, MTAF…PYRQ, and KEAKNISSSTAEVPSISQPE. Residues 23-37 are compositionally biased toward basic residues; that stretch reads SKQKKPTKFRERMRR. 3 stretches are compositionally biased toward polar residues: residues 67 to 86, 95 to 121, and 486 to 499; these read MTAFNNNDNGEVQDVTNNFF, PVQSSVKTFLTGNNDEDSNFQQNQNPK, and NISSSTAEVPSISQ. Coiled coils occupy residues 469 to 486 and 542 to 566; these read DQLVELLAQEKEEKEAKN and ESASEESKVLAAALNDAKQNLDENV.

Interacts directly with ADY3. Probable component of a spindle pole body (SPB) complex composed of ADY3, SSP1, DON1, MPC54, SPO21/MPC70, NUD1 and CNM67. Phosphorylated.

It is found in the prospore membrane. Its function is as follows. Involved in the pathway that organizes the shaping and sizing of the prospore membrane (PSM) during sporulation. May be required for the formation of ADY3 and DON1-containing protein coats at the leading edge of the PSMs during meiosis II. This is Sporulation-specific protein 1 (SSP1) from Saccharomyces cerevisiae (strain ATCC 204508 / S288c) (Baker's yeast).